A 235-amino-acid chain; its full sequence is 2-C-methyl-D-erythritol 4-phosphate cytidylyltransferase (235 aa).

Belongs to the IspD/TarI cytidylyltransferase family. IspD subfamily.

It carries out the reaction 2-C-methyl-D-erythritol 4-phosphate + CTP + H(+) = 4-CDP-2-C-methyl-D-erythritol + diphosphate. It functions in the pathway isoprenoid biosynthesis; isopentenyl diphosphate biosynthesis via DXP pathway; isopentenyl diphosphate from 1-deoxy-D-xylulose 5-phosphate: step 2/6. In terms of biological role, catalyzes the formation of 4-diphosphocytidyl-2-C-methyl-D-erythritol from CTP and 2-C-methyl-D-erythritol 4-phosphate (MEP). The sequence is that of 2-C-methyl-D-erythritol 4-phosphate cytidylyltransferase from Ectopseudomonas mendocina (strain ymp) (Pseudomonas mendocina).